A 184-amino-acid chain; its full sequence is ATP synthase subunit b, chloroplastic (184 aa).

Residues 27-49 (LATNPINLSVVFGVLIFFGKGVL) traverse the membrane as a helical segment.

The protein belongs to the ATPase B chain family. F-type ATPases have 2 components, F(1) - the catalytic core - and F(0) - the membrane proton channel. F(1) has five subunits: alpha(3), beta(3), gamma(1), delta(1), epsilon(1). F(0) has four main subunits: a(1), b(1), b'(1) and c(10-14). The alpha and beta chains form an alternating ring which encloses part of the gamma chain. F(1) is attached to F(0) by a central stalk formed by the gamma and epsilon chains, while a peripheral stalk is formed by the delta, b and b' chains.

The protein resides in the plastid. It is found in the chloroplast thylakoid membrane. Its function is as follows. F(1)F(0) ATP synthase produces ATP from ADP in the presence of a proton or sodium gradient. F-type ATPases consist of two structural domains, F(1) containing the extramembraneous catalytic core and F(0) containing the membrane proton channel, linked together by a central stalk and a peripheral stalk. During catalysis, ATP synthesis in the catalytic domain of F(1) is coupled via a rotary mechanism of the central stalk subunits to proton translocation. In terms of biological role, component of the F(0) channel, it forms part of the peripheral stalk, linking F(1) to F(0). The protein is ATP synthase subunit b, chloroplastic of Olimarabidopsis pumila (Dwarf rocket).